The chain runs to 669 residues: DNA ligase (669 aa).

NAD(+)-binding positions include 34–38, 83–84, and E114; these read DAEYD and SL. Catalysis depends on K116, which acts as the N6-AMP-lysine intermediate. NAD(+) is bound by residues R137, E171, K287, and K311. Residues C405, C408, C423, and C428 each contribute to the Zn(2+) site. Residues 591 to 669 form the BRCT domain; it reads NIASYFAGKT…EERFLQELNK (79 aa).

It belongs to the NAD-dependent DNA ligase family. LigA subfamily. Mg(2+) is required as a cofactor. Requires Mn(2+) as cofactor.

It carries out the reaction NAD(+) + (deoxyribonucleotide)n-3'-hydroxyl + 5'-phospho-(deoxyribonucleotide)m = (deoxyribonucleotide)n+m + AMP + beta-nicotinamide D-nucleotide.. Its function is as follows. DNA ligase that catalyzes the formation of phosphodiester linkages between 5'-phosphoryl and 3'-hydroxyl groups in double-stranded DNA using NAD as a coenzyme and as the energy source for the reaction. It is essential for DNA replication and repair of damaged DNA. This Bacillus cytotoxicus (strain DSM 22905 / CIP 110041 / 391-98 / NVH 391-98) protein is DNA ligase.